A 1217-amino-acid chain; its full sequence is ATP-dependent helicase/nuclease subunit A (1217 aa).

The UvrD-like helicase ATP-binding domain maps to 10 to 475 (VIWTDAQWQS…MDLSQNFRSR (466 aa)). 31-38 (AAAGSGKT) is a binding site for ATP. Residues 491–786 (DEQVGEVNYD…RMMTIHSSKG (296 aa)) form the UvrD-like helicase C-terminal domain.

The protein belongs to the helicase family. AddA subfamily. As to quaternary structure, heterodimer of AddA and AddB/RexB. Mg(2+) serves as cofactor.

The enzyme catalyses Couples ATP hydrolysis with the unwinding of duplex DNA by translocating in the 3'-5' direction.. It carries out the reaction ATP + H2O = ADP + phosphate + H(+). In terms of biological role, the heterodimer acts as both an ATP-dependent DNA helicase and an ATP-dependent, dual-direction single-stranded exonuclease. Recognizes the chi site generating a DNA molecule suitable for the initiation of homologous recombination. The AddA nuclease domain is required for chi fragment generation; this subunit has the helicase and 3' -&gt; 5' nuclease activities. The chain is ATP-dependent helicase/nuclease subunit A from Staphylococcus aureus (strain bovine RF122 / ET3-1).